We begin with the raw amino-acid sequence, 974 residues long: Membrane-associated phosphatidylinositol transfer protein 3 (974 aa).

A phosphoserine mark is found at S30, S31, S109, S295, S298, S321, S343, and S495. The tract at residues 310–347 (CSLASSKRLSKSNVDVSSGVEDEDPKRPLPRKQSDSST) is disordered. Polar residues predominate over residues 312 to 325 (LASSKRLSKSNVDV). Residues 390–594 (FDFDVSDFFL…VAFILRQVMR (205 aa)) enclose the DDHD domain. Positions 497-535 (PLLDAPASPPQAPRFQRTERRLSKGSSHSDSSESSDSLA) are disordered. Low complexity predominate over residues 520–533 (KGSSHSDSSESSDS). Phosphoserine is present on residues S612, S907, S928, and S946. A disordered region spans residues 927-974 (MSVQQPDPPAANPKPERAQSQPESDKDHERPLPALSWARGPPKFESVP).

The protein belongs to the PtdIns transfer protein family. PI transfer class IIA subfamily. Interacts with PTK2B via its C-terminus.

The protein resides in the endomembrane system. Functionally, catalyzes the transfer of phosphatidylinositol and phosphatidylcholine between membranes (in vitro). Binds calcium ions. In Mus musculus (Mouse), this protein is Membrane-associated phosphatidylinositol transfer protein 3 (Pitpnm3).